The chain runs to 335 residues: Mitochondrial carrier protein CoAc2 (335 aa).

A run of 6 helical transmembrane segments spans residues 12 to 32 (SGPGLPLAVRELLAGGVAGGV), 75 to 95 (FYRGNGASVARIVPYAALHYM), 119 to 139 (LVAGSIAGGTAVICTYPLDLV), 187 to 207 (GMAPSLYGIFPYSGLKFYFYE), 225 to 242 (LGCGSVAGLLGQTITYPL), and 280 to 302 (LFSGLSINYLKVVPSVAIGFTVY). Solcar repeat units lie at residues 17–103 (PLAV…YRRW), 113–212 (QGPV…MKSH), and 219–308 (KGII…MKVC).

Belongs to the mitochondrial carrier (TC 2.A.29) family. Expressed throughout the plant.

The protein localises to the mitochondrion inner membrane. Required for the accumulation of coenzyme A in the mitochondrial matrix. This is Mitochondrial carrier protein CoAc2 from Zea mays (Maize).